A 571-amino-acid chain; its full sequence is Origin recognition complex subunit 5 (571 aa).

Disordered stretches follow at residues D90–D142 and Q404–L430. Low complexity-rich tracts occupy residues N107–D133 and P407–K416. Basic and acidic residues predominate over residues Q417 to R428.

Belongs to the ORC1 family. ORC is composed of six subunits.

Its subcellular location is the nucleus. Component of the origin recognition complex (ORC) that binds origins of replication. DNA-binding is ATP-dependent, however specific DNA sequences that define origins of replication have not been identified so far. ORC is required to assemble the pre-replication complex necessary to initiate DNA replication. The polypeptide is Origin recognition complex subunit 5 (orcE) (Dictyostelium discoideum (Social amoeba)).